Here is a 391-residue protein sequence, read N- to C-terminus: Alpha-2B adrenergic receptor (391 aa).

Residues 1–25 (AIAAVITFLILFTIFGNALVILAVL) form a helical membrane-spanning segment. The Cytoplasmic portion of the chain corresponds to 26–36 (TSRSLRAPQNL). A helical transmembrane segment spans residues 37–62 (FLVSLAAADILVATLIIPFSLANELL). At 63–72 (GYWYFRRTWC) the chain is on the extracellular side. Cysteine 72 and cysteine 151 are oxidised to a cystine. The helical transmembrane segment at 73-95 (EVYLALDVLFCTSSIVHLCAISL) threads the bilayer. The Cytoplasmic portion of the chain corresponds to 96-117 (DRYWAVSRALEYNSKRTPRRIK). The helical transmembrane segment at 118-140 (CIILTVWLIAAVISLPPLIYKGD) threads the bilayer. Residues 141–156 (QGPQPRGRPQCKLNQE) lie on the Extracellular side of the membrane. A helical membrane pass occupies residues 157-180 (AWYILASSIGSFFAPCLIMILVYL). At 181–355 (RIYLIAKRSH…LTREKRFTFV (175 aa)) the chain is on the cytoplasmic side. Disordered regions lie at residues 194 to 218 (PRAK…APSS) and 233 to 312 (EANR…PLQQ). Residues 233-247 (EANRHSKSTGEKVEG) show a composition bias toward basic and acidic residues. The span at 256-266 (PGVPPSWPPLP) shows a compositional bias: pro residues. A compositionally biased stretch (basic and acidic residues) spans 271-281 (GQEEDIYRASP). The segment covering 282-294 (EEEAGDDEEEECE) has biased composition (acidic residues). Residues 295–309 (PQAVPVSPASACSPP) show a composition bias toward low complexity. A helical membrane pass occupies residues 356 to 379 (LAVVIGVFVLCWFPFFFSYSLGAI). Residues 380 to 388 (CPQHCKVPH) are Extracellular-facing. A helical membrane pass occupies residues 389–391 (GLF).

Belongs to the G-protein coupled receptor 1 family. Adrenergic receptor subfamily. ADRA2B sub-subfamily. In terms of assembly, interacts with RAB26. Interacts with PPP1R9B. Interacts with GGA1, GGA2 and GGA3.

It is found in the cell membrane. In terms of biological role, alpha-2 adrenergic receptors mediate the catecholamine-induced inhibition of adenylate cyclase through the action of G proteins. This is Alpha-2B adrenergic receptor (ADRA2B) from Erinaceus europaeus (Western European hedgehog).